We begin with the raw amino-acid sequence, 102 residues long: Protein E7 (102 aa).

Positions 1–36 are E7 terminal domain; that stretch reads MACARPLTGRTLPADESPCLTLILEPVSGEAAKNST. The segment at 61–97 is a zinc-finger region; the sequence is CNDCDKRLNFSVKTTCSTILTLQQLLTEDLDFLCSFC. The Nuclear export signal motif lies at 79–87; sequence ILTLQQLLT.

This sequence belongs to the papillomaviridae E7 protein family. In terms of assembly, homodimer. Homooligomer. Interacts with host RB1; this interaction induces dissociation of RB1-E2F1 complex thereby disrupting RB1 activity. Interacts with host EP300; this interaction represses EP300 transcriptional activity. Interacts with protein E2; this interaction inhibits E7 oncogenic activity. Interacts with host TMEM173/STING; this interaction impairs the ability of TMEM173/STING to sense cytosolic DNA and promote the production of type I interferon (IFN-alpha and IFN-beta). Highly phosphorylated.

It localises to the host cytoplasm. The protein resides in the host nucleus. In terms of biological role, plays a role in viral genome replication by driving entry of quiescent cells into the cell cycle. Stimulation of progression from G1 to S phase allows the virus to efficiently use the cellular DNA replicating machinery to achieve viral genome replication. E7 protein has both transforming and trans-activating activities. Induces the disassembly of the E2F1 transcription factor from RB1, with subsequent transcriptional activation of E2F1-regulated S-phase genes. Interferes with host histone deacetylation mediated by HDAC1 and HDAC2, leading to transcription activation. Also plays a role in the inhibition of both antiviral and antiproliferative functions of host interferon alpha. Interaction with host TMEM173/STING impairs the ability of TMEM173/STING to sense cytosolic DNA and promote the production of type I interferon (IFN-alpha and IFN-beta). The chain is Protein E7 from Odocoileus virginianus (White-tailed deer).